The following is a 306-amino-acid chain: Low density lipoprotein receptor adapter protein 1 (306 aa).

M1 carries the post-translational modification N-acetylmethionine. Position 14 is a phosphoserine (S14). The PID domain maps to 44 to 168 (GMVFSLKYLG…VAQAFKVAFE (125 aa)). The interval 178 to 204 (EKREKANQEGGDVPGTRRDSTPSLKTS) is disordered. 2 positions are modified to phosphoserine: S197 and S200. Residues 210–214 (LLDLE) carry the Clathrin box motif. The AP-2 complex binding stretch occupies residues 247-274 (WELDDGLDEAFSRLAQSRTNPQVLDTGL). A [DE]-X(1,2)-F-X-X-[FL]-X-X-X-R motif motif is present at residues 255-264 (EAFSRLAQSR).

In terms of assembly, interacts (via PID domain) with LDLR (via NPXY motifs). Binds to soluble clathrin trimers. Interacts with AP2B1; the interaction mediates the association with the AP-2 complex. Interacts with VLDLR. Interacts with LRP2.

The protein resides in the cytoplasm. Adapter protein (clathrin-associated sorting protein (CLASP)) required for efficient endocytosis of the LDL receptor (LDLR) in polarized cells such as hepatocytes and lymphocytes, but not in non-polarized cells (fibroblasts). May be required for LDL binding and internalization but not for receptor clustering in coated pits. May facilitate the endocytosis of LDLR and LDLR-LDL complexes from coated pits by stabilizing the interaction between the receptor and the structural components of the pits. May also be involved in the internalization of other LDLR family members. Binds to phosphoinositides, which regulate clathrin bud assembly at the cell surface. Required for trafficking of LRP2 to the endocytic recycling compartment which is necessary for LRP2 proteolysis, releasing a tail fragment which translocates to the nucleus and mediates transcriptional repression. This is Low density lipoprotein receptor adapter protein 1 from Rattus norvegicus (Rat).